A 375-amino-acid polypeptide reads, in one-letter code: Queuine tRNA-ribosyltransferase (375 aa).

Catalysis depends on Asp-89, which acts as the Proton acceptor. Residues 89–93, Asp-143, Gln-187, and Gly-214 each bind substrate; that span reads DSGGF. The RNA binding stretch occupies residues 245 to 251; the sequence is GVGKPED. Catalysis depends on Asp-264, which acts as the Nucleophile. The interval 269 to 273 is RNA binding; important for wobble base 34 recognition; the sequence is TRNAR. Cys-302, Cys-304, Cys-307, and His-333 together coordinate Zn(2+).

It belongs to the queuine tRNA-ribosyltransferase family. In terms of assembly, homodimer. Within each dimer, one monomer is responsible for RNA recognition and catalysis, while the other monomer binds to the replacement base PreQ1. Zn(2+) is required as a cofactor.

It catalyses the reaction 7-aminomethyl-7-carbaguanine + guanosine(34) in tRNA = 7-aminomethyl-7-carbaguanosine(34) in tRNA + guanine. The protein operates within tRNA modification; tRNA-queuosine biosynthesis. Its function is as follows. Catalyzes the base-exchange of a guanine (G) residue with the queuine precursor 7-aminomethyl-7-deazaguanine (PreQ1) at position 34 (anticodon wobble position) in tRNAs with GU(N) anticodons (tRNA-Asp, -Asn, -His and -Tyr). Catalysis occurs through a double-displacement mechanism. The nucleophile active site attacks the C1' of nucleotide 34 to detach the guanine base from the RNA, forming a covalent enzyme-RNA intermediate. The proton acceptor active site deprotonates the incoming PreQ1, allowing a nucleophilic attack on the C1' of the ribose to form the product. After dissociation, two additional enzymatic reactions on the tRNA convert PreQ1 to queuine (Q), resulting in the hypermodified nucleoside queuosine (7-(((4,5-cis-dihydroxy-2-cyclopenten-1-yl)amino)methyl)-7-deazaguanosine). This Citrobacter koseri (strain ATCC BAA-895 / CDC 4225-83 / SGSC4696) protein is Queuine tRNA-ribosyltransferase.